A 126-amino-acid chain; its full sequence is Aspartate 1-decarboxylase (126 aa).

The active-site Schiff-base intermediate with substrate; via pyruvic acid is the Ser25. A Pyruvic acid (Ser) modification is found at Ser25. Thr57 contributes to the substrate binding site. Catalysis depends on Tyr58, which acts as the Proton donor. Substrate is bound at residue 73-75; that stretch reads GAA.

It belongs to the PanD family. Heterooctamer of four alpha and four beta subunits. Pyruvate serves as cofactor. In terms of processing, is synthesized initially as an inactive proenzyme, which is activated by self-cleavage at a specific serine bond to produce a beta-subunit with a hydroxyl group at its C-terminus and an alpha-subunit with a pyruvoyl group at its N-terminus.

It localises to the cytoplasm. It catalyses the reaction L-aspartate + H(+) = beta-alanine + CO2. It functions in the pathway cofactor biosynthesis; (R)-pantothenate biosynthesis; beta-alanine from L-aspartate: step 1/1. Its function is as follows. Catalyzes the pyruvoyl-dependent decarboxylation of aspartate to produce beta-alanine. This chain is Aspartate 1-decarboxylase, found in Cronobacter sakazakii (strain ATCC BAA-894) (Enterobacter sakazakii).